A 252-amino-acid chain; its full sequence is Cytochrome b6-f complex iron-sulfur subunit, chloroplastic (252 aa).

Residues 94 to 114 (LVLAAVAPVVASAGGCYLYYF) form a helical membrane-spanning segment. A Rieske domain is found at 141-235 (WFKSHKKNAR…VEDDNGKILL (95 aa)). The [2Fe-2S] cluster site is built by Cys-181, His-183, Cys-199, and His-202. An intrachain disulfide couples Cys-186 to Cys-201.

It belongs to the Rieske iron-sulfur protein family. As to quaternary structure, the 4 large subunits of the cytochrome b6-f complex are cytochrome b6, subunit IV (17 kDa polypeptide, petD), cytochrome f and the Rieske protein, while the 4 small subunits are petG, petL, petM and petN. The complex functions as a dimer. [2Fe-2S] cluster is required as a cofactor.

The protein resides in the plastid. The protein localises to the chloroplast thylakoid membrane. The catalysed reaction is 2 oxidized [plastocyanin] + a plastoquinol + 2 H(+)(in) = 2 reduced [plastocyanin] + a plastoquinone + 4 H(+)(out). Component of the cytochrome b6-f complex, which mediates electron transfer between photosystem II (PSII) and photosystem I (PSI), cyclic electron flow around PSI, and state transitions. In Bigelowiella natans (Pedinomonas minutissima), this protein is Cytochrome b6-f complex iron-sulfur subunit, chloroplastic (petC).